A 125-amino-acid polypeptide reads, in one-letter code: Large ribosomal subunit protein bL12 (125 aa).

It belongs to the bacterial ribosomal protein bL12 family. As to quaternary structure, homodimer. Part of the ribosomal stalk of the 50S ribosomal subunit. Forms a multimeric L10(L12)X complex, where L10 forms an elongated spine to which 2 to 4 L12 dimers bind in a sequential fashion. Binds GTP-bound translation factors.

Functionally, forms part of the ribosomal stalk which helps the ribosome interact with GTP-bound translation factors. Is thus essential for accurate translation. In Helicobacter pylori (strain P12), this protein is Large ribosomal subunit protein bL12.